The primary structure comprises 438 residues: Actin-like protein ARP6 (438 aa).

The tract at residues 158-181 is disordered; the sequence is DIVRGNSDSTNSTSSESKNAQDSG. Over residues 163 to 174 the composition is skewed to low complexity; that stretch reads NSDSTNSTSSES.

It belongs to the actin family. ARP6 subfamily. Component of the SWR1 chromatin remodeling complex composed of at least ACT1, ARP4, RVB1, RVB2, ARP6, YAF9, VPS71, VPS72, SWC3, SWC4, SWC5, SWC7 and SWR1, and perhaps BDF1.

The protein localises to the cytoplasm. Its subcellular location is the nucleus. Functionally, component of the SWR1 complex which mediates the ATP-dependent exchange of histone H2A for the H2A variant HZT1 leading to transcriptional regulation of selected genes by chromatin remodeling. Involved in chromosome stability. In Saccharomyces cerevisiae (strain ATCC 204508 / S288c) (Baker's yeast), this protein is Actin-like protein ARP6 (ARP6).